Reading from the N-terminus, the 354-residue chain is Methionine import ATP-binding protein MetN (354 aa).

One can recognise an ABC transporter domain in the interval 8–250; it reads LDHIDITFRQ…PKEALTQEFI (243 aa). 42–49 is a binding site for ATP; the sequence is GYSGAGKS.

Belongs to the ABC transporter superfamily. Methionine importer (TC 3.A.1.24) family. As to quaternary structure, the complex is composed of two ATP-binding proteins (MetN), two transmembrane proteins (MetI) and a solute-binding protein (MetQ).

The protein resides in the cell membrane. The catalysed reaction is L-methionine(out) + ATP + H2O = L-methionine(in) + ADP + phosphate + H(+). It carries out the reaction D-methionine(out) + ATP + H2O = D-methionine(in) + ADP + phosphate + H(+). Its function is as follows. Part of the ABC transporter complex MetNIQ involved in methionine import. Responsible for energy coupling to the transport system. The polypeptide is Methionine import ATP-binding protein MetN (Streptococcus pyogenes serotype M2 (strain MGAS10270)).